A 269-amino-acid chain; its full sequence is Phosphatidylglycerol--prolipoprotein diacylglyceryl transferase (269 aa).

The next 7 helical transmembrane spans lie at 17–37 (LKIH…WLLA), 56–76 (LVFW…VLFY), 92–112 (WKGG…ALWF), 120–140 (FFEL…AGRI), 174–194 (PSQL…LWLY), 202–222 (MAVS…VEFV), and 237–257 (LTMG…LIWL). Arg-139 serves as a coordination point for a 1,2-diacyl-sn-glycero-3-phospho-(1'-sn-glycerol).

Belongs to the Lgt family.

It localises to the cell inner membrane. The enzyme catalyses L-cysteinyl-[prolipoprotein] + a 1,2-diacyl-sn-glycero-3-phospho-(1'-sn-glycerol) = an S-1,2-diacyl-sn-glyceryl-L-cysteinyl-[prolipoprotein] + sn-glycerol 1-phosphate + H(+). It participates in protein modification; lipoprotein biosynthesis (diacylglyceryl transfer). Catalyzes the transfer of the diacylglyceryl group from phosphatidylglycerol to the sulfhydryl group of the N-terminal cysteine of a prolipoprotein, the first step in the formation of mature lipoproteins. This is Phosphatidylglycerol--prolipoprotein diacylglyceryl transferase from Pseudomonas entomophila (strain L48).